Reading from the N-terminus, the 1734-residue chain is Complement C4-A (1734 aa).

A signal peptide spans 1-19; sequence MRLLWGLAWVFSFCASSLQ. Cys-66 and Cys-95 are disulfide-bonded. N-linked (GlcNAc...) asparagine glycosylation occurs at Asn-224. A disulfide bridge connects residues Cys-633 and Cys-667. Residues 674-677 constitute a propeptide that is removed on maturation; it reads RQKR. Disulfide bonds link Cys-700–Cys-726, Cys-701–Cys-733, and Cys-714–Cys-734. One can recognise an Anaphylatoxin-like domain in the interval 700–734; the sequence is CCQDGMTKLPMKRTCEQRAARVPQQACREPFLSCC. N-linked (GlcNAc...) asparagine glycosylation is found at Asn-743 and Asn-859. A cross-link (isoglutamyl cysteine thioester (Cys-Gln)) is located at residues 1002 to 1005; the sequence is CAEQ. Residues Asn-1128 and Asn-1383 are each glycosylated (N-linked (GlcNAc...) asparagine). The residue at position 1409 (Tyr-1409) is a Sulfotyrosine. Positions 1437 to 1443 are excised as a propeptide; the sequence is RRSRRRR. 5 cysteine pairs are disulfide-bonded: Cys-1461–Cys-1525, Cys-1573–Cys-1578, Cys-1585–Cys-1663, Cys-1608–Cys-1732, and Cys-1708–Cys-1717. The region spanning 1585 to 1732 is the NTR domain; sequence CPRLLRSLER…FLMEFSSRGC (148 aa).

As to quaternary structure, in absence of complement activation, circulates in blood as a disulfide-linked trimer of an alpha, beta and gamma chain. Complement C4b is composed of Complement C4b-A, Complement C4 beta and Complement C4 gamma chains that are associated via disulfide bonds. Non-enzymatic component of the C3 convertase, also named C4bC2b, composed of the serine protease complement C2b (C2), as well as complement C4b. Non-enzymatic component of the C5 convertase, also named C4bC2bC3b, composed of the serine protease complement C2b (C2), complement C3b, as well as complement C4b. In terms of processing, prior to secretion, the single-chain precursor is enzymatically cleaved by plasminogen (PLG) to yield non-identical chains alpha, beta and gamma. During activation of the complement systems, the alpha chain is cleaved into C4a and C4b by different proteases depending on the complement pathway: C4b stays linked to the beta and gamma chains, while C4a is released in the plasma. The alpha chain is cleaved by C1S to generate C4a and C4b following activation by the classical complement system. The alpha chain is cleaved to generate C4a and C4b by MASP2 following activation by the lectin complement system. The alpha chain is cleaved by GZMK to generate C4a and C4b following activation by the GZMK complement system. Further degradation of C4b by C1 into the inactive fragments C4c and C4d blocks the generation of C3 convertase. The proteolytic cleavages often are incomplete so that many structural forms can be found in plasma. Post-translationally, upon activation, the internal thioester bond reacts with carbohydrate antigens on the target surface to form amide or ester bonds, leading to covalent association with the surface of pathogens. Complement C4b interacts with complement C3b via a thioester linkage. In terms of processing, N- and O-glycosylated. O-glycosylated with a core 1 or possibly core 8 glycan.

It is found in the secreted. The protein localises to the synapse. It localises to the cell projection. The protein resides in the axon. Its subcellular location is the dendrite. It is found in the cell surface. With respect to regulation, specifically inhibited by nanobody hC4Nb8, inhibiting the classical complement pathway. In terms of biological role, precursor of non-enzymatic components of the classical, lectin and GZMK complement pathways, which consist in a cascade of proteins that leads to phagocytosis and breakdown of pathogens and signaling that strengthens the adaptive immune system. Its function is as follows. Non-enzymatic component of C3 and C5 convertases. Generated following cleavage by complement proteases (C1S, MASP2 or GZMK, depending on the complement pathway), it covalently attaches to the surface of pathogens, where it acts as an opsonin that marks the surface of antigens for removal. It then recruits the serine protease complement C2b to form the C3 and C5 convertases, which cleave and activate C3 and C5, respectively, the next components of the complement pathways. Complement C4b-A isotype is responsible for effective binding to form amide bonds with immune aggregates or protein antigens, while complement C4b-B isotype catalyzes the transacylation of the thioester carbonyl group to form ester bonds with carbohydrate antigens. Functionally, putative humoral mediator released following cleavage by complement proteases (C1S, MASP2 or GZMK, depending on the complement pathway). While it is strongly similar to anaphylatoxins, its role is unclear. Was reported to act as a mediator of local inflammatory process; however these effects were probably due to contamination with C3a and/C5a anaphylatoxins in biological assays. This Mus musculus (Mouse) protein is Complement C4-A.